A 370-amino-acid chain; its full sequence is uncharacterized protein (370 aa).

Lys207 bears the N6-(pyridoxal phosphate)lysine mark.

Belongs to the class-V pyridoxal-phosphate-dependent aminotransferase family. The cofactor is pyridoxal 5'-phosphate.

This is an uncharacterized protein from Bacillus subtilis (strain 168).